The primary structure comprises 64 residues: Conotoxin Cal6.24 (64 aa).

A signal peptide spans 1-22 (MKLTCVMIVAVLVLTVCKVVTS). 3 disulfides stabilise this stretch: cysteine 32-cysteine 50, cysteine 40-cysteine 54, and cysteine 49-cysteine 60.

As to expression, expressed by the venom duct.

The protein localises to the secreted. In terms of biological role, probable neurotoxin. The chain is Conotoxin Cal6.24 from Californiconus californicus (California cone).